The chain runs to 417 residues: MLKREMNIADYDAELWQAMEQEKVRQEEHIELIASENYTSPRVMQAQGSQLTNKYAEGYPGKRYYGGCEYVDIVEQLAIDRAKELFGADYANVQPHSGSQANFAVYTALLQPGDTVLGMNLAQGGHLTHGSPVNFSGKLYNIVPYGIDESGKIDYDEMAKLAKEHKPKMIIGGFSAYSGVVDWAKMREIADSIGAYLFVDMAHVAGLIAAGVYPNPVPHAHVVTTTTHKTLAGPRGGLILAKGGDEELYKKLNSAVFPSAQGGPLMHVIAGKAVALKEAMEPEFKVYQQQVAKNAKAMVEVFLNRGYKVVSGGTENHLFLLDLVDKNLTGKEADAALGRANITVNKNSVPNDPKSPFVTSGIRIGSPAVTRRGFKEAEVKELAGWMCDVLDNINDEATIERVKAKVLDICARFPVYA.

Residues Leu121 and 125 to 127 (GHL) contribute to the (6S)-5,6,7,8-tetrahydrofolate site. Lys229 is modified (N6-(pyridoxal phosphate)lysine). Residue 355-357 (SPF) coordinates (6S)-5,6,7,8-tetrahydrofolate.

It belongs to the SHMT family. Homodimer. Pyridoxal 5'-phosphate is required as a cofactor.

The protein localises to the cytoplasm. It catalyses the reaction (6R)-5,10-methylene-5,6,7,8-tetrahydrofolate + glycine + H2O = (6S)-5,6,7,8-tetrahydrofolate + L-serine. Its pathway is one-carbon metabolism; tetrahydrofolate interconversion. It participates in amino-acid biosynthesis; glycine biosynthesis; glycine from L-serine: step 1/1. In terms of biological role, catalyzes the reversible interconversion of serine and glycine with tetrahydrofolate (THF) serving as the one-carbon carrier. This reaction serves as the major source of one-carbon groups required for the biosynthesis of purines, thymidylate, methionine, and other important biomolecules. Also exhibits THF-independent aldolase activity toward beta-hydroxyamino acids, producing glycine and aldehydes, via a retro-aldol mechanism. The polypeptide is Serine hydroxymethyltransferase (Salmonella schwarzengrund (strain CVM19633)).